A 161-amino-acid chain; its full sequence is Vitamin K epoxide reductase complex subunit 1 (161 aa).

At 1-9 (MGTTWRSPG) the chain is on the cytoplasmic side. Residues 10 to 29 (LVRLALCLAGLALSLYALHV) traverse the membrane as a helical segment. Over 30–80 (KAARARDENYRALCDVGTAISCSRVFSSRWGRGFGLVEHMLGADSVLNQSN) the chain is Lumenal. Cysteines 43 and 51 form a disulfide. N80 serves as a coordination point for (S)-warfarin. Residues 81 to 95 (SIFGCLFYTLQLLLG) traverse the membrane as a helical segment. At 96-100 (CLRGR) the chain is on the cytoplasmic side. A helical transmembrane segment spans residues 101-128 (WASILLVLSSLVSVAGSVYLAWILFFVL). Residues 129-131 (YDF) lie on the Lumenal side of the membrane. C132 and C135 are disulfide-bonded. The helical transmembrane segment at 132-153 (CIVCITTYAINVGLMLLSFQKV) threads the bilayer. Phylloquinone is bound by residues C135 and Y139. A (S)-warfarin-binding site is contributed by Y139. At 154–161 (PEHKTKKH) the chain is on the cytoplasmic side.

The protein belongs to the VKOR family. As to expression, detected in liver.

The protein localises to the endoplasmic reticulum membrane. The catalysed reaction is phylloquinone + [protein]-disulfide + H2O = 2,3-epoxyphylloquinone + [protein]-dithiol. The enzyme catalyses phylloquinol + [protein]-disulfide = phylloquinone + [protein]-dithiol. Its activity is regulated as follows. Inhibited by warfarin (coumadin). Warfarin locks VKORC1 in both redox states into the closed conformation. In terms of biological role, involved in vitamin K metabolism. Catalytic subunit of the vitamin K epoxide reductase (VKOR) complex which reduces inactive vitamin K 2,3-epoxide to active vitamin K. Vitamin K is required for the gamma-carboxylation of various proteins, including clotting factors, and is required for normal blood coagulation, but also for normal bone development. The protein is Vitamin K epoxide reductase complex subunit 1 (Vkorc1) of Mus musculus (Mouse).